A 330-amino-acid chain; its full sequence is Polygalacturonase inhibitor 1 (330 aa).

The N-terminal stretch at 1 to 21 (MDKTATLCLLFLFTFLTTCLS) is a signal peptide. 2 disulfide bridges follow: Cys25–Cys55 and Cys56–Cys63. LRR repeat units lie at residues 69 to 93 (NHRV…VGDL), 94 to 117 (PYLE…TIAK), 118 to 142 (LKNL…ISQL), 143 to 166 (KNLE…LSTL), 167 to 189 (PKIL…SFGS), 191 to 215 (PGTV…LGNI), 217 to 237 (FNRI…LFGS), 238 to 260 (NKTT…KVDI), 261 to 285 (PKTL…WTEA), and 287 to 309 (LQFF…KLQT). N-linked (GlcNAc...) asparagine glycosylation is found at Asn106 and Asn130. A glycan (N-linked (GlcNAc...) asparagine) is linked at Asn238. Asn291 carries N-linked (GlcNAc...) asparagine glycosylation. Disulfide bonds link Cys298–Cys320 and Cys322–Cys329.

It belongs to the polygalacturonase-inhibiting protein family.

The protein localises to the secreted. The protein resides in the cell wall. Its subcellular location is the membrane. Inhibitor of fungal polygalacturonase. It is an important factor for plant resistance to phytopathogenic fungi. The chain is Polygalacturonase inhibitor 1 (PGIP1) from Arabidopsis thaliana (Mouse-ear cress).